The sequence spans 444 residues: N-succinylarginine dihydrolase (444 aa).

Residues 19–28 (AGLSFGNVAS), N110, and 137–138 (HR) each bind substrate. E174 is a catalytic residue. R214 lines the substrate pocket. H250 is a catalytic residue. The substrate site is built by D252 and N362. The active-site Nucleophile is C368.

This sequence belongs to the succinylarginine dihydrolase family. As to quaternary structure, homodimer.

The enzyme catalyses N(2)-succinyl-L-arginine + 2 H2O + 2 H(+) = N(2)-succinyl-L-ornithine + 2 NH4(+) + CO2. The protein operates within amino-acid degradation; L-arginine degradation via AST pathway; L-glutamate and succinate from L-arginine: step 2/5. In terms of biological role, catalyzes the hydrolysis of N(2)-succinylarginine into N(2)-succinylornithine, ammonia and CO(2). The chain is N-succinylarginine dihydrolase from Shewanella sp. (strain ANA-3).